The following is a 137-amino-acid chain: MMSFGSFVYIACLLLNGANMLLQIFCVIMFSDLEMDYINPIDLCNKLNDLVMPEIISHTLVTLLLLLGKKWLLFLANLPLLVFHANQVIHKTHILDATEIFRQLGRHKRDNFIKVTFYLIMFFTLLYCMVMSLIQEE.

At 1 to 9 the chain is on the cytoplasmic side; that stretch reads MMSFGSFVY. The helical transmembrane segment at 10-30 threads the bilayer; it reads IACLLLNGANMLLQIFCVIMF. Over 31 to 62 the chain is Extracellular; sequence SDLEMDYINPIDLCNKLNDLVMPEIISHTLVT. A helical transmembrane segment spans residues 63-83; that stretch reads LLLLLGKKWLLFLANLPLLVF. Residues 84–114 are Cytoplasmic-facing; that stretch reads HANQVIHKTHILDATEIFRQLGRHKRDNFIK. Residues 115 to 135 traverse the membrane as a helical segment; the sequence is VTFYLIMFFTLLYCMVMSLIQ. At 136–137 the chain is on the extracellular side; sequence EE.

This sequence belongs to the cornichon family.

Its subcellular location is the endoplasmic reticulum. It localises to the membrane. The protein localises to the golgi apparatus membrane. Functionally, regulates export of the secretory proteins from the endoplasmic reticulum in COPII-coated vesicles. The sequence is that of ER-derived vesicles protein erv14 (erv14) from Schizosaccharomyces pombe (strain 972 / ATCC 24843) (Fission yeast).